A 194-amino-acid polypeptide reads, in one-letter code: MNIDFHIKPEIRILGIDDSALLNEKVMIVGAVFRGGDWIDGVLRSEITKDGLDATEVICNMIKKSKHYDQIRTVILDGITYGGFNVVDIQMLYRETGIPVIVVMRSYPDFEKIKSALKYFPDGEERWTIIKRAGKIERIPGEKSPIYIQRAGIGVETVKKIIRLTSIRSNIPEPLRVAHLIATGIILGESRGKA.

The protein belongs to the UPF0215 family.

This is UPF0215 protein Mbar_A0619 from Methanosarcina barkeri (strain Fusaro / DSM 804).